The sequence spans 134 residues: Ribulose bisphosphate carboxylase small subunit (134 aa).

Belongs to the RuBisCO small chain family. In terms of assembly, heterohexadecamer of 8 large and 8 small subunits.

In terms of biological role, ruBisCO catalyzes two reactions: the carboxylation of D-ribulose 1,5-bisphosphate, the primary event in carbon dioxide fixation, as well as the oxidative fragmentation of the pentose substrate. Both reactions occur simultaneously and in competition at the same active site. Although the small subunit is not catalytic it is essential for maximal activity. The protein is Ribulose bisphosphate carboxylase small subunit of Bradyrhizobium diazoefficiens (strain JCM 10833 / BCRC 13528 / IAM 13628 / NBRC 14792 / USDA 110).